The chain runs to 1543 residues: ATP-binding cassette sub-family A member 10 (1543 aa).

7 helical membrane-spanning segments follow: residues 83–103, 135–155, 185–205, 210–230, 240–260, 264–284, and 310–330; these read YWLKGFVAFQAAINAAIIEVT, WFHFTCLVSFSSFIYFASLNV, ICFIFIMSIFMALVITSIPIV, FMVIFTLYSLYGLSLIALAFL, LAGLAGFLFTVFWGCLGFTVL, LPLSLGWVLSLLSPFAFTAGM, and IATFFILAFDTLFYLIFTLYF. In terms of domain architecture, ABC transporter 1 spans 391-626; that stretch reads IRIRNVIKEY…WGIGYHLSLH (236 aa). Residue 427–434 participates in ATP binding; it reads GHNGAGKS. Helical transmembrane passes span 774–794, 890–910, 926–946, 985–1005, 1014–1034, 1046–1066, 1073–1093, and 1113–1133; these read LLCLLLVLGIAFIPIILEKIM, LNCFPVLMGIVSNALMGIFNF, IVLDLGFIDGSIFLLLITNCV, IPLYFLILFSIHLIYYFIFLG, FVLVVCIIGCAVSLIFLTYVL, GFWSFGFFIILICVSTIMVST, LILCMIFIPSFTLLGYVMLLI, and KTILLTTLIPYLQSVIFLFVI. Positions 1153–1164 are enriched in basic and acidic residues; the sequence is ISPRSRETHPNP. The disordered stretch occupies residues 1153–1177; that stretch reads ISPRSRETHPNPEEPEEEDEDVQAE. A compositionally biased stretch (acidic residues) spans 1165-1174; sequence EEPEEEDEDV. The ABC transporter 2 domain maps to 1206–1440; it reads YETKKSCFST…FGRDYLLEIK (235 aa). 1239-1246 contributes to the ATP binding site; that stretch reads GHNGAGKS.

The protein belongs to the ABC transporter superfamily. ABCA family. Widely expressed. Highly expressed in skeletal muscle, heart, brain and gastrointestinal tract.

Its subcellular location is the membrane. In terms of biological role, probable transporter which may play a role in macrophage lipid transport and homeostasis. This chain is ATP-binding cassette sub-family A member 10 (ABCA10), found in Homo sapiens (Human).